A 4367-amino-acid polypeptide reads, in one-letter code: Dynein heavy chain, cytoplasmic (4367 aa).

The segment covering 1–13 (MMDSVPSPPPQPS) has biased composition (pro residues). Residues 1-20 (MMDSVPSPPPQPSPDANGVA) form a disordered region. The interval 1 to 1904 (MMDSVPSPPP…HIKMANAKLN (1904 aa)) is stem. Coiled coils occupy residues 676–693 (ARQI…VEQV), 1176–1215 (IKFA…EAVR), 1327–1351 (LTHF…KEAL), 1557–1574 (YKEF…LNRV), and 1637–1668 (NIPN…KERV). 4 AAA regions span residues 1905 to 2130 (YGFE…VLVS), 2202 to 2460 (EAIR…FTVA), 2566 to 2815 (EVNT…WVRG), and 2909 to 3179 (TFCE…QGKI). Position 1943–1950 (1943–1950 (GPAGTGKT)) interacts with ATP. Positions 2195 to 2218 (ASLEKLQEAIRRLAAERQLVVNDI) form a coiled coil. ATP-binding positions include 2240-2247 (GNSGSGKS), 2605-2612 (GPPGSGKT), and 2947-2954 (GVSGSGKT). 3 coiled-coil regions span residues 3193 to 3296 (QYVK…LARA), 3423 to 3481 (PLRE…SRVQ), and 3778 to 3809 (VIET…VEQI). Positions 3193–3481 (QYVKLYNEKR…AIKAEMSRVQ (289 aa)) are stalk. AAA regions lie at residues 3565 to 3794 (LSTA…EISA) and 4003 to 4215 (AERF…VIDT).

The protein belongs to the dynein heavy chain family. Consists of at least two heavy chains and a number of intermediate and light chains.

It is found in the cytoplasm. Its subcellular location is the cytoskeleton. Its function is as follows. Cytoplasmic dynein acts as a motor for the intracellular retrograde motility of vesicles and organelles along microtubules. Dynein has ATPase activity; the force-producing power stroke is thought to occur on release of ADP. Required to maintain uniform nuclear distribution in hyphae. This is Dynein heavy chain, cytoplasmic (ro-1) from Neurospora crassa (strain ATCC 24698 / 74-OR23-1A / CBS 708.71 / DSM 1257 / FGSC 987).